Here is a 441-residue protein sequence, read N- to C-terminus: Apolipoprotein N-acyltransferase (441 aa).

The next 7 helical transmembrane spans lie at 23 to 43, 45 to 65, 75 to 95, 97 to 117, 133 to 153, 156 to 176, and 178 to 198; these read IIFKIIKVFFIAILLSNSIYL, FFENIFTQTISPFLAIWGLVL, YFWIGFFVGILWFWWIGLSSI, FNLNYLVPIIPIIIGFIYGLL, GIFCISFIHPLGFDWFNWGIF, YGFFDPSYRGIICIFLIAYFI, and EGYISRYYKIAIVLILFFSGF. One can recognise a CN hydrolase domain in the interval 215-441; the sequence is INTNISQDQK…LSKEIFNDKK (227 aa). The Proton acceptor role is filled by E256. K310 is an active-site residue. C359 functions as the Nucleophile in the catalytic mechanism.

It belongs to the CN hydrolase family. Apolipoprotein N-acyltransferase subfamily.

The protein localises to the cell inner membrane. It catalyses the reaction N-terminal S-1,2-diacyl-sn-glyceryl-L-cysteinyl-[lipoprotein] + a glycerophospholipid = N-acyl-S-1,2-diacyl-sn-glyceryl-L-cysteinyl-[lipoprotein] + a 2-acyl-sn-glycero-3-phospholipid + H(+). Its pathway is protein modification; lipoprotein biosynthesis (N-acyl transfer). In terms of biological role, catalyzes the phospholipid dependent N-acylation of the N-terminal cysteine of apolipoprotein, the last step in lipoprotein maturation. The protein is Apolipoprotein N-acyltransferase of Campylobacter jejuni subsp. jejuni serotype O:2 (strain ATCC 700819 / NCTC 11168).